The following is a 264-amino-acid chain: Elongation factor Ts (264 aa).

The tract at residues 76–79 is involved in Mg(2+) ion dislocation from EF-Tu; that stretch reads TDFV.

It belongs to the EF-Ts family.

The protein localises to the cytoplasm. Associates with the EF-Tu.GDP complex and induces the exchange of GDP to GTP. It remains bound to the aminoacyl-tRNA.EF-Tu.GTP complex up to the GTP hydrolysis stage on the ribosome. This Deinococcus deserti (strain DSM 17065 / CIP 109153 / LMG 22923 / VCD115) protein is Elongation factor Ts.